The sequence spans 334 residues: Chitin synthase export chaperone (334 aa).

Transmembrane regions (helical) follow at residues 49–69, 85–105, 123–143, 159–179, 185–205, 220–240, and 244–264; these read IIFEGAASVMHIVALIMTVIM, ILSFFYLYMLLTAMSLIIDAG, GLSSAVITCLLINGFVGFQLY, LAAFAISFLVSLATFKSWAGL, VGLFVVLYLLNAVQLFVYVAM, LGDIAFGIFFFVAGQVLLYAF, and ICIAISHYLDGLFLATVCNLL.

It belongs to the CHS7 family.

Its subcellular location is the endoplasmic reticulum membrane. In terms of biological role, chaperone required for the export of the chitin synthase chs3 from the endoplasmic reticulum. Plays a critical role in cell wall integrity and virulence. The sequence is that of Chitin synthase export chaperone from Fusarium oxysporum f. sp. lycopersici (strain 4287 / CBS 123668 / FGSC 9935 / NRRL 34936) (Fusarium vascular wilt of tomato).